Here is a 261-residue protein sequence, read N- to C-terminus: Lipase LipV (261 aa).

Serine 87 serves as the catalytic Nucleophile. Active-site charge relay system residues include aspartate 217 and histidine 240.

This sequence belongs to the AB hydrolase superfamily.

The enzyme catalyses a carboxylic ester + H2O = an alcohol + a carboxylate + H(+). It catalyses the reaction a tetradecanoate ester + H2O = an aliphatic alcohol + tetradecanoate + H(+). The catalysed reaction is decanoate ester + H2O = decanoate + an aliphatic alcohol + H(+). It carries out the reaction an octanoate ester + H2O = an aliphatic alcohol + octanoate + H(+). The enzyme catalyses a dodecanoate ester + H2O = an aliphatic alcohol + dodecanoate + H(+). It catalyses the reaction a butanoate ester + H2O = an aliphatic alcohol + butanoate + H(+). The catalysed reaction is hexadecanoate ester + H2O = an aliphatic alcohol + hexadecanoate + H(+). It carries out the reaction octadecanoate ester + H2O = an aliphatic alcohol + octadecanoate + H(+). Its activity is regulated as follows. Is inhibited by tetrahydrolipstatin, a specific lipase inhibitor and RHC 80267, a diacylglycerol lipase inhibitor, but not by phenylglyoxal and iodoacetate. Its function is as follows. Lipase that displays broad substrate specificity and preferentially hydrolyzes p-nitrophenyl myristate in vitro. Also shows significant activity with pNP-butyrate (68%), pNP-octanoate (82%), pNP-decanoate (90%), and pNP-laurate (74%). Is probably involved in lipid catabolism. Is active at low pH, and might play some important role in mycobacterial biology in macrophages where the bacteria encounters acidic stress. This chain is Lipase LipV, found in Mycobacterium tuberculosis (strain ATCC 25618 / H37Rv).